Reading from the N-terminus, the 87-residue chain is Probable Fe(2+)-trafficking protein (87 aa).

It belongs to the Fe(2+)-trafficking protein family.

Its function is as follows. Could be a mediator in iron transactions between iron acquisition and iron-requiring processes, such as synthesis and/or repair of Fe-S clusters in biosynthetic enzymes. The protein is Probable Fe(2+)-trafficking protein of Francisella philomiragia subsp. philomiragia (strain ATCC 25017 / CCUG 19701 / FSC 153 / O#319-036).